The following is a 515-amino-acid chain: MIEIDLTSFVIITLSLAVGLTGGYYGRRFLAESRIRTAEEEVAKMLDEAAKEVEAKKKEILLEAKDEIHRNRQDAEKDIRERRRELDRVERRIIQKEEMIDKKTENMEKKEQVLLEKEKETEKTQQDLQMVLSQQLKELERLSGLSSEEAKELLLYNVSQQIRQETAVLIRNIENEAKEEADKKAKNIVSLAIQKCAADVVSESTVSVVPLPNDEMKGRIIGREGRNIRTFEALSGVDLIIDDTPEAVILSSFDPIRREVARVALGNLVSDGRIHPARIEEMVEKARKEIEQEIREVGEQAAFEVGVHGLHPELIKLLGRLKYRTSYGQNVLRHSVEVAHLAGIMAAELEVDIMLAKRSGLLHDIGKAVDHEVSGPHVEIGVDLAKKYRENKDVIHGIEAHHGDIEPETVEAVLVQAADAISASRPGARRETLETYIKRLEKLENVAESFSGVDRTFAIQAGREIRIIVKPEEIDDLHSINLARDIAAKIEQDLDYPGQIKVVVIRETRSVEYAK.

The chain crosses the membrane as a helical span at residues 6 to 26 (LTSFVIITLSLAVGLTGGYYG). One can recognise a KH domain in the interval 205 to 290 (TVSVVPLPND…EMVEKARKEI (86 aa)). The HD domain occupies 331-424 (VLRHSVEVAH…VQAADAISAS (94 aa)).

The protein belongs to the RNase Y family.

It is found in the cell membrane. Its function is as follows. Endoribonuclease that initiates mRNA decay. The polypeptide is Ribonuclease Y (Syntrophomonas wolfei subsp. wolfei (strain DSM 2245B / Goettingen)).